The sequence spans 124 residues: Iron-sulfur cluster insertion protein ErpA (124 aa).

Iron-sulfur cluster is bound by residues C52, C116, and C118.

This sequence belongs to the HesB/IscA family. As to quaternary structure, homodimer. Iron-sulfur cluster is required as a cofactor.

Functionally, required for insertion of 4Fe-4S clusters for at least IspG. This is Iron-sulfur cluster insertion protein ErpA from Vibrio atlanticus (strain LGP32) (Vibrio splendidus (strain Mel32)).